Here is a 74-residue protein sequence, read N- to C-terminus: Cecropin-P3 (74 aa).

The signal sequence occupies residues methionine 1–serine 13. A propeptide spans arginine 45–isoleucine 74 (removed in mature form).

It belongs to the cecropin family. In terms of tissue distribution, expressed in the body wall, intestine, uterus and ovary.

It is found in the secreted. In terms of biological role, has antibacterial activity against several Gram-positive and Gram-negative bacteria. Is weakly active against yeasts. Acts by a nonpore mechanism. The sequence is that of Cecropin-P3 (ASCEC-3) from Ascaris suum (Pig roundworm).